The following is a 116-amino-acid chain: Tachykinin-3 (116 aa).

An N-terminal signal peptide occupies residues 1 to 20 (MRSAMLFAAVLALSLAWTFG). The propeptide occupies 21-79 (AVCEEPQGQGGRLSKDSDLYQLPPSLLRRLYDSRPVSLEGLLKVLSKASVGPKETSLPQ). M91 is subject to Methionine amide. Residues 93 to 116 (KRNSQPDTPTDVVEENTPSFGILK) form a disordered region. Residues 95–116 (NSQPDTPTDVVEENTPSFGILK) constitute a propeptide that is removed on maturation.

It belongs to the tachykinin family.

The protein localises to the secreted. Functionally, tachykinins are active peptides which excite neurons, evoke behavioral responses, are potent vasodilators and secretagogues, and contract (directly or indirectly) many smooth muscles. Is a critical central regulator of gonadal function. The protein is Tachykinin-3 (Tac3) of Mus musculus (Mouse).